The chain runs to 503 residues: Cytochrome P450 3A43 (503 aa).

C442 is a heme binding site.

The protein belongs to the cytochrome P450 family. Heme serves as cofactor. In terms of tissue distribution, highest expression level in prostate. Also expressed in liver, kidney, pancreas, fetal liver and fetal skeletal muscle.

It localises to the endoplasmic reticulum membrane. The protein localises to the microsome membrane. It carries out the reaction an organic molecule + reduced [NADPH--hemoprotein reductase] + O2 = an alcohol + oxidized [NADPH--hemoprotein reductase] + H2O + H(+). Functionally, exhibits low testosterone 6-beta-hydroxylase activity. This chain is Cytochrome P450 3A43 (CYP3A43), found in Homo sapiens (Human).